The primary structure comprises 46 residues: Light-harvesting protein B-800/850 beta 1 chain (46 aa).

The Cytoplasmic segment spans residues 2-19 (AERSLSGLTEEEAIAVHD). His18 and His36 together coordinate a bacteriochlorophyll. Residues 20 to 42 (QFKTTFSAFIILAAVAHVLVWVW) traverse the membrane as a helical segment. Topologically, residues 43 to 46 (KPWF) are periplasmic.

It belongs to the antenna complex beta subunit family. In terms of assembly, the core complex is formed by different alpha and beta chains, binding bacteriochlorophyll molecules, and arranged most probably in tetrameric structures disposed around the reaction center.

It localises to the cell inner membrane. Its function is as follows. Antenna complexes are light-harvesting systems, which transfer the excitation energy to the reaction centers. The sequence is that of Light-harvesting protein B-800/850 beta 1 chain (B1) from Magnetospirillum molischianum (Rhodospirillum molischianum).